The sequence spans 879 residues: Metabotropic glutamate receptor 3 (879 aa).

Residues 1-22 (MKMLTRLQVLMLALFSKGFLVS) form the signal peptide. At 23–576 (LGDHNFMRRE…EDYIRWEDAW (554 aa)) the chain is on the extracellular side. C57 and C99 are disulfide-bonded. Residues S151 and 172–174 (AST) each bind L-glutamate. An N-linked (GlcNAc...) asparagine glycan is attached at N209. Y222 is an L-glutamate binding site. 7 cysteine pairs are disulfide-bonded: C240–C527, C361–C373, C412–C419, C509–C528, C513–C531, C534–C546, and C549–C562. N292 carries N-linked (GlcNAc...) asparagine glycosylation. D301 is an L-glutamate binding site. K389 is an L-glutamate binding site. Residues N414 and N439 are each glycosylated (N-linked (GlcNAc...) asparagine). Residues 577–599 (AIGPVTIACLGFMCTCIVITVFI) form a helical membrane-spanning segment. At 600–613 (KHNNTPLVKASGRE) the chain is on the cytoplasmic side. A helical transmembrane segment spans residues 614-634 (LCYILLFGVSLSYCMTFFFIA). The Extracellular segment spans residues 635-645 (KPSPVICALRR). A helical transmembrane segment spans residues 646–664 (LGLGTSFAICYSALLTKTN). The Cytoplasmic segment spans residues 665–688 (CIARIFDGVKNGAQRPKFISPSSQ). A helical membrane pass occupies residues 689 to 709 (VFICLGLILVQIVMVSVWLIL). The Extracellular portion of the chain corresponds to 710–734 (ETPGTRRYTLPEKRETVILKCNVKD). The helical transmembrane segment at 735–756 (SSMLISLTYDVVLVILCTVYAF) threads the bilayer. Residues 757–769 (KTRKCPENFNEAK) lie on the Cytoplasmic side of the membrane. A helical membrane pass occupies residues 770-792 (FIGFTMYTTCIIWLAFLPIFYVT). Residues 793–802 (SSDYRVQTTT) lie on the Extracellular side of the membrane. The chain crosses the membrane as a helical span at residues 803 to 828 (MCISVSLSGFVVLGCLFAPKVHIVLF). Residues 829 to 879 (QPQKNVVTHRLHLNRFSVSGTATTYSQSSASTYVPTVCNGREVLDSTTSSL) are Cytoplasmic-facing.

This sequence belongs to the G-protein coupled receptor 3 family. As to quaternary structure, interacts with TAMALIN.

The protein localises to the cell membrane. In terms of biological role, G-protein coupled receptor for glutamate. Ligand binding causes a conformation change that triggers signaling via guanine nucleotide-binding proteins (G proteins) and modulates the activity of down-stream effectors. Signaling inhibits adenylate cyclase activity. The polypeptide is Metabotropic glutamate receptor 3 (Grm3) (Mus musculus (Mouse)).